The sequence spans 364 residues: tRNA-specific 2-thiouridylase MnmA (364 aa).

ATP is bound by residues 13–20 (GMSGGVDS) and methionine 39. The interval 99 to 101 (NPD) is interaction with target base in tRNA. The active-site Nucleophile is the cysteine 104. Residues cysteine 104 and cysteine 200 are joined by a disulfide bond. Glycine 128 is a binding site for ATP. Residues 150 to 152 (KDQ) are interaction with tRNA. Catalysis depends on cysteine 200, which acts as the Cysteine persulfide intermediate. An interaction with tRNA region spans residues 310 to 311 (RY).

Belongs to the MnmA/TRMU family.

It is found in the cytoplasm. It catalyses the reaction S-sulfanyl-L-cysteinyl-[protein] + uridine(34) in tRNA + AH2 + ATP = 2-thiouridine(34) in tRNA + L-cysteinyl-[protein] + A + AMP + diphosphate + H(+). Catalyzes the 2-thiolation of uridine at the wobble position (U34) of tRNA, leading to the formation of s(2)U34. This chain is tRNA-specific 2-thiouridylase MnmA, found in Alkaliphilus oremlandii (strain OhILAs) (Clostridium oremlandii (strain OhILAs)).